The chain runs to 215 residues: Large ribosomal subunit protein uL3 (215 aa).

Q153 carries the N5-methylglutamine modification.

The protein belongs to the universal ribosomal protein uL3 family. Part of the 50S ribosomal subunit. Forms a cluster with proteins L14 and L19. In terms of processing, methylated by PrmB.

In terms of biological role, one of the primary rRNA binding proteins, it binds directly near the 3'-end of the 23S rRNA, where it nucleates assembly of the 50S subunit. This chain is Large ribosomal subunit protein uL3, found in Nitrosococcus oceani (strain ATCC 19707 / BCRC 17464 / JCM 30415 / NCIMB 11848 / C-107).